Consider the following 520-residue polypeptide: GMP synthase [glutamine-hydrolyzing] (520 aa).

The 199-residue stretch at 4–202 folds into the Glutamine amidotransferase type-1 domain; the sequence is KILILDFGSQ…VHDICGCGSD (199 aa). Catalysis depends on Cys-81, which acts as the Nucleophile. Active-site residues include His-176 and Glu-178. The GMPS ATP-PPase domain maps to 203 to 395; that stretch reads WNMPDYVEEA…LGLPHDMVYR (193 aa). ATP is bound at residue 230-236; sequence SGGVDSS.

As to quaternary structure, homodimer.

The catalysed reaction is XMP + L-glutamine + ATP + H2O = GMP + L-glutamate + AMP + diphosphate + 2 H(+). Its pathway is purine metabolism; GMP biosynthesis; GMP from XMP (L-Gln route): step 1/1. Its function is as follows. Catalyzes the synthesis of GMP from XMP. The protein is GMP synthase [glutamine-hydrolyzing] of Thiobacillus denitrificans (strain ATCC 25259 / T1).